A 307-amino-acid chain; its full sequence is Beta-lactamase (307 aa).

The tat-type signal signal peptide spans 1–34; it reads MRNRGFGRRELLVAMAMLVSVTGCARHASGARPA. Serine 84 acts as the Acyl-ester intermediate in catalysis. Residue serine 142 coordinates substrate. Glutamate 182 acts as the Proton acceptor in catalysis. Residue 251–253 participates in substrate binding; that stretch reads TGT.

Belongs to the class-A beta-lactamase family. Monomer. Post-translationally, exported by the Tat system. The position of the signal peptide cleavage has not been experimentally proven.

It localises to the periplasm. The protein localises to the secreted. The enzyme catalyses a beta-lactam + H2O = a substituted beta-amino acid. Its activity is regulated as follows. Is inhibited by clavulanate. Its function is as follows. Extended spectrum beta-lactamase (ESBL) that inactivates beta-lactam antibiotics by hydrolyzing the amide group of the beta-lactam ring. Displays high levels of penicillinase and cephalosporinase activity as well as measurable activity with carbapenems, including imipenem and meropenem. Plays a primary role in the intrinsic resistance of mycobacteria to beta-lactam antibiotics. This Mycobacterium bovis (strain ATCC BAA-935 / AF2122/97) protein is Beta-lactamase (blaC).